Here is a 428-residue protein sequence, read N- to C-terminus: tRNA modification GTPase MnmE (428 aa).

Residues R20, E76, and R116 each contribute to the (6S)-5-formyl-5,6,7,8-tetrahydrofolate site. A TrmE-type G domain is found at 212–351; it reads GFEVAIVGAP…LVAAIGERLL (140 aa). Residue N222 participates in K(+) binding. GTP is bound by residues 222-227, 241-247, and 266-269; these read NAGKST, SEIAGTT, and DTAG. S226 is a Mg(2+) binding site. Positions 241, 243, and 246 each coordinate K(+). A Mg(2+)-binding site is contributed by T247. Residue K428 coordinates (6S)-5-formyl-5,6,7,8-tetrahydrofolate.

Belongs to the TRAFAC class TrmE-Era-EngA-EngB-Septin-like GTPase superfamily. TrmE GTPase family. As to quaternary structure, homodimer. Heterotetramer of two MnmE and two MnmG subunits. Requires K(+) as cofactor.

It localises to the cytoplasm. Its function is as follows. Exhibits a very high intrinsic GTPase hydrolysis rate. Involved in the addition of a carboxymethylaminomethyl (cmnm) group at the wobble position (U34) of certain tRNAs, forming tRNA-cmnm(5)s(2)U34. The sequence is that of tRNA modification GTPase MnmE from Cereibacter sphaeroides (strain ATCC 17029 / ATH 2.4.9) (Rhodobacter sphaeroides).